The primary structure comprises 132 residues: Small ribosomal subunit protein uS19 (132 aa).

It belongs to the universal ribosomal protein uS19 family.

Functionally, protein S19 forms a complex with S13 that binds strongly to the 16S ribosomal RNA. In Korarchaeum cryptofilum (strain OPF8), this protein is Small ribosomal subunit protein uS19.